A 375-amino-acid chain; its full sequence is MQKLQIFVYIYLFMLLVAGPVDLNENSEQKENVEKKGLCNACLWRQNNKSSRLEAIKIQILSKLRLETAPNISKDAIRQLLPKAPPLRELIDQYDVQRDDSSDGSLEDDDYHVTTETVITMPTESDLLAEVQEKPKCCFFKFSSKIQHNKVVKAQLWIYLRPVKTPTTVFVQILRLIKPMKDGTRYTGIRSLKLDMNPGTGIWQSIDVKTVLQNWLKQPESNLGIEIKALDENGHDLAVTFPEPGEEGLNPFLEVKVTDTPKRSRRDFGLDCDEHSTESRCCRYPLTVDFEAFGWDWIIAPKRYKANYCSGECEFLFLQKYPHTHLVHQANPKGSAGPCCTPTKMSPINMLYFNGKEQIIYGKIPGMVVDRCGCS.

The N-terminal stretch at 1 to 23 (MQKLQIFVYIYLFMLLVAGPVDL) is a signal peptide. Positions 24 to 266 (NENSEQKENV…VTDTPKRSRR (243 aa)) are excised as a propeptide. Asparagine 48 and asparagine 71 each carry an N-linked (GlcNAc...) asparagine glycan. Cystine bridges form between cysteine 272–cysteine 282, cysteine 281–cysteine 340, cysteine 309–cysteine 372, and cysteine 313–cysteine 374.

This sequence belongs to the TGF-beta family. As to quaternary structure, homodimer; disulfide-linked. Interacts with WFIKKN2, leading to inhibit its activity. Interacts with FSTL3. Post-translationally, synthesized as large precursor molecule that undergoes proteolytic cleavage to generate an N-terminal propeptide and a disulfide linked C-terminal dimer, which is the biologically active molecule. The circulating form consists of a latent complex of the C-terminal dimer and other proteins, including its propeptide, which maintain the C-terminal dimer in a latent, inactive state. Ligand activation requires additional cleavage of the prodomain by a tolloid-like metalloproteinase.

The protein localises to the secreted. Acts specifically as a negative regulator of skeletal muscle growth. The sequence is that of Growth/differentiation factor 8 (MSTN) from Ovis aries (Sheep).